The following is a 189-amino-acid chain: NAD(P)H-quinone oxidoreductase subunit 6, chloroplastic (189 aa).

Transmembrane regions (helical) follow at residues 10–30 (LSLLLLEIGTIIGALGVVLLP), 32–52 (ILYSGFLLGGVLICIAGIYLL), 61–81 (AQVLIYVGAINVIILFAIMLV), 98–118 (GLSSFICFSFFILLSNMIFDT), and 144–164 (LLPFEIVSVLLLVTLVGAVFI).

It belongs to the complex I subunit 6 family. NDH is composed of at least 16 different subunits, 5 of which are encoded in the nucleus.

It is found in the plastid. The protein localises to the chloroplast thylakoid membrane. The catalysed reaction is a plastoquinone + NADH + (n+1) H(+)(in) = a plastoquinol + NAD(+) + n H(+)(out). The enzyme catalyses a plastoquinone + NADPH + (n+1) H(+)(in) = a plastoquinol + NADP(+) + n H(+)(out). In terms of biological role, NDH shuttles electrons from NAD(P)H:plastoquinone, via FMN and iron-sulfur (Fe-S) centers, to quinones in the photosynthetic chain and possibly in a chloroplast respiratory chain. The immediate electron acceptor for the enzyme in this species is believed to be plastoquinone. Couples the redox reaction to proton translocation, and thus conserves the redox energy in a proton gradient. This chain is NAD(P)H-quinone oxidoreductase subunit 6, chloroplastic (ndhG), found in Mesostigma viride (Green alga).